Consider the following 119-residue polypeptide: Large ribosomal subunit protein bL19 (119 aa).

The protein belongs to the bacterial ribosomal protein bL19 family.

Functionally, this protein is located at the 30S-50S ribosomal subunit interface and may play a role in the structure and function of the aminoacyl-tRNA binding site. In Petrotoga mobilis (strain DSM 10674 / SJ95), this protein is Large ribosomal subunit protein bL19.